The sequence spans 333 residues: Photosystem II assembly lipoprotein Ycf48 (333 aa).

Residues 1–23 (MNRLLSSAVNLLLVLVLGVGLSG) form the signal peptide. The N-palmitoyl cysteine moiety is linked to residue Cys-24. The S-diacylglycerol cysteine moiety is linked to residue Cys-24.

The protein belongs to the Ycf48 family. As to quaternary structure, part of early PSII assembly complexes which includes D1 (psbA) and PsbI; not found in mature PSII. Binds to the lumenal side of PSII complexes. Interacts with YidC.

The protein localises to the cellular thylakoid membrane. In terms of biological role, a factor required for optimal assembly of photosystem II (PSII), acting in the early stages of PSII assembly. Also plays a role in replacement of photodamaged D1 (psbA). Assists YidC in synthesis of chlorophyll-binding proteins. The polypeptide is Photosystem II assembly lipoprotein Ycf48 (Synechococcus sp. (strain CC9902)).